Reading from the N-terminus, the 286-residue chain is MWTPPRNDQQYLNWQWYSSILSSHAAMCGCPDAVAHFNHLASVLRAPQNPPPPGPQRNLPLRRLPALPAAPEAPGDRAPWPMAGGAEGEDGGAGGDADHGGAAGGPEDADLLDAVAAAETLLEIPAKKPTPRAIESLEAYKSLTRNTTHRNSHSIPGTSDVASLARKLFRECNNNQQLLTFFQQAARDPGGTPRCTTPAKKGSKKKAYFSPQSSSSDESPRGKTRSRRKAGRKAQRKRRRPSPSSSSSSCSNSESWESNSDSCSTKSKKSTKIKISTLPCYQGGGI.

Disordered regions lie at residues 67 to 108 (LPAA…GPED) and 184 to 286 (QAAR…GGGI). The segment covering 222–241 (GKTRSRRKAGRKAQRKRRRP) has biased composition (basic residues). The segment covering 242 to 265 (SPSSSSSSCSNSESWESNSDSCST) has biased composition (low complexity).

In terms of processing, phosphorylated at C-terminal serines.

The polypeptide is Probable protein VP2 (Homo sapiens (Human)).